A 291-amino-acid chain; its full sequence is Phosphatidylglycerol--prolipoprotein diacylglyceryl transferase (291 aa).

Transmembrane regions (helical) follow at residues 21–41, 60–80, 96–116, 130–150, 198–218, 225–245, and 260–280; these read VALHWYGLMYLVGFVFAMWLA, LLYAGFLGVFLGGRIGYVLFY, WDGGMSFHGGLIGVILVMIIF, FIAPLIPFGLGAGRLGNFING, SQLYELALEGVVLFIILNLFI, GAVSGLFLIGYGAFRIIVEFF, and ISMGQILSIPMIIAGAIMMVW. Arg143 lines the a 1,2-diacyl-sn-glycero-3-phospho-(1'-sn-glycerol) pocket.

This sequence belongs to the Lgt family.

Its subcellular location is the cell inner membrane. The enzyme catalyses L-cysteinyl-[prolipoprotein] + a 1,2-diacyl-sn-glycero-3-phospho-(1'-sn-glycerol) = an S-1,2-diacyl-sn-glyceryl-L-cysteinyl-[prolipoprotein] + sn-glycerol 1-phosphate + H(+). Its pathway is protein modification; lipoprotein biosynthesis (diacylglyceryl transfer). Catalyzes the transfer of the diacylglyceryl group from phosphatidylglycerol to the sulfhydryl group of the N-terminal cysteine of a prolipoprotein, the first step in the formation of mature lipoproteins. The protein is Phosphatidylglycerol--prolipoprotein diacylglyceryl transferase of Salmonella agona (strain SL483).